A 480-amino-acid polypeptide reads, in one-letter code: Molybdate-anion transporter (480 aa).

A run of 12 helical transmembrane segments spans residues methionine 1–leucine 21, alanine 44–tyrosine 63, isoleucine 78–tryptophan 98, phenylalanine 129–phenylalanine 149, threonine 177–leucine 197, leucine 199–valine 219, valine 274–leucine 294, serine 304–phenylalanine 324, valine 339–valine 359, phenylalanine 369–leucine 389, serine 401–leucine 421, and phenylalanine 441–leucine 461.

It belongs to the major facilitator superfamily.

It is found in the cell membrane. Its function is as follows. Mediates high-affinity intracellular uptake of the rare oligo-element molybdenum. This chain is Molybdate-anion transporter (mfsd5), found in Takifugu rubripes (Japanese pufferfish).